A 488-amino-acid polypeptide reads, in one-letter code: Probable malate:quinone oxidoreductase (488 aa).

It belongs to the MQO family. It depends on FAD as a cofactor.

It catalyses the reaction (S)-malate + a quinone = a quinol + oxaloacetate. It participates in carbohydrate metabolism; tricarboxylic acid cycle; oxaloacetate from (S)-malate (quinone route): step 1/1. This is Probable malate:quinone oxidoreductase from Neisseria meningitidis serogroup C / serotype 2a (strain ATCC 700532 / DSM 15464 / FAM18).